Here is a 101-residue protein sequence, read N- to C-terminus: NAD(P)H-quinone oxidoreductase subunit 4L, chloroplastic (101 aa).

The next 3 membrane-spanning stretches (helical) occupy residues 2 to 22 (MLEH…YGLI), 32 to 52 (MCLE…SDLF), and 61 to 81 (IFSI…PAIV).

The protein belongs to the complex I subunit 4L family. NDH is composed of at least 16 different subunits, 5 of which are encoded in the nucleus.

The protein resides in the plastid. It localises to the chloroplast thylakoid membrane. It catalyses the reaction a plastoquinone + NADH + (n+1) H(+)(in) = a plastoquinol + NAD(+) + n H(+)(out). It carries out the reaction a plastoquinone + NADPH + (n+1) H(+)(in) = a plastoquinol + NADP(+) + n H(+)(out). Its function is as follows. NDH shuttles electrons from NAD(P)H:plastoquinone, via FMN and iron-sulfur (Fe-S) centers, to quinones in the photosynthetic chain and possibly in a chloroplast respiratory chain. The immediate electron acceptor for the enzyme in this species is believed to be plastoquinone. Couples the redox reaction to proton translocation, and thus conserves the redox energy in a proton gradient. The polypeptide is NAD(P)H-quinone oxidoreductase subunit 4L, chloroplastic (Nymphaea alba (White water-lily)).